We begin with the raw amino-acid sequence, 511 residues long: Lariat debranching enzyme (511 aa).

A divalent metal cation contacts are provided by Cys-52, His-54, Asp-83, and Asn-128. The lariat recognition loop stretch occupies residues 168-198 (SGIYSHGDVEFSHYERPAFAERDVKSAYHVR). His-226, His-278, and His-280 together coordinate a divalent metal cation. Positions 473–511 (EDDFIIDRGHGSEEPEAKKSRLEEEKKKKKKKIENLKTL) are disordered. Basic and acidic residues predominate over residues 477–498 (IIDRGHGSEEPEAKKSRLEEEK).

Belongs to the lariat debranching enzyme family. It depends on Fe(2+) as a cofactor. The cofactor is Zn(2+). Mn(2+) serves as cofactor.

The protein localises to the nucleus. Its activity is regulated as follows. Active in presence of diverse metals including Fe(2+), Zn(2+), Mn(2+). Binds two metal cations in two adjacent alpha and beta metal-binding pockets. In terms of biological role, cleaves the 2'-5' phosphodiester linkage at the branch point of lariat intron pre-mRNAs after splicing and converts them into linear molecules that are subsequently degraded. It thereby facilitates ribonucleotide turnover. The chain is Lariat debranching enzyme (dbr-1) from Caenorhabditis briggsae.